A 428-amino-acid polypeptide reads, in one-letter code: MVETAVILAGGEGNRLKPLTEEVPKALLKVAGRELLYRTIKQLQDVGVKNFVIVVNKKFEGKVKAFLKEHNFEAEVIPNEHPEKENGYSLYLAKGRIKGEFAVVMSDHIYEKAFLEKAVEGKGLIVDRLGLYINKNEATKVKCEEGRIKYIGKNLEKYDGFDTGFFVLDESIFEVAEEALKEQKKLTMSELAKRAQIPCTEVSGYFWMDVDTPEDVEKAKKYLVKTAIKGVGDGFISRNLNRKVSTRISPYLVDKFTPNQLTVLTFLLGMFSALVAYFSPALGGILLQINSMLDGLDGEVARAQMRTTKFGAWLDSVLDRYVDFAFLSALAMHLKPSWDFMPWVFAALFGSVMVSYSTERYKGAYCEDAYAVIKELRYLLGKRDERIFMIMIFTILGWIKALFVVLAIITNLRVILTIYLVWKKKGNV.

A mobA-like NTP transferase region spans residues 2-227; sequence VETAVILAGG…KAKKYLVKTA (226 aa). CTP contacts are provided by residues 8–10, Lys-25, Glu-80, and Glu-116; that span reads LAG. Residue Glu-116 participates in Mg(2+) binding. Residues 228-425 form a CDP-alcohol phosphatidyltransferases region; it reads IKGVGDGFIS…LTIYLVWKKK (198 aa). 3 helical membrane-spanning segments follow: residues 266 to 286, 336 to 356, and 389 to 409; these read FLLG…GGIL, PSWD…MVSY, and MIMI…LAII.

The protein in the N-terminal section; belongs to the MobA family. It in the C-terminal section; belongs to the CDP-alcohol phosphatidyltransferase class-I family. Mg(2+) is required as a cofactor.

The protein localises to the membrane. It catalyses the reaction 1D-myo-inositol 3-phosphate + CTP + H(+) = CDP-1L-myo-inositol + diphosphate. The enzyme catalyses CDP-1L-myo-inositol + 1D-myo-inositol 3-phosphate = bis(1L-myo-inositol) 3,1'-phosphate 1-phosphate + CMP + H(+). Its function is as follows. Involved in biosynthesis of di-myo-inositol phosphate (DIP), a widespread organic solute in microorganisms adapted to hot environments. Catalyzes the condensation of CTP and L-myo-inositol-1-phosphate into CDP-L-myo-inositol, as well as the biosynthesis of di-myo-inositol-1,3'-phosphate-1'-phosphate (DIPP) from CDP-L-myo-inositol and L-myo-inositol-1-phosphate. This Aquifex aeolicus (strain VF5) protein is Bifunctional IPC transferase and DIPP synthase (spsI).